The primary structure comprises 560 residues: Hemocyanin, units G and H (560 aa).

A disulfide bridge connects residues Cys1 and Cys11. Residues 1–184 (CPTPDAPQYA…AKGLVSQHIE (184 aa)) are unit G. A cross-link (2'-(S-cysteinyl)-histidine (Cys-His)) is located at residues 12-14 (CLH). Cys93 and Cys98 form a disulfide bridge. An N-linked (GlcNAc...) asparagine glycan is attached at Asn142. The interval 185–560 (DHDTETLIRK…KPGTGTQLTR (376 aa)) is unit H. His230 serves as a coordination point for Cu cation. Residues Cys236 and Cys246 are joined by a disulfide bond. The N-linked (GlcNAc...) asparagine glycan is linked to Asn240. Residues 247–249 (CQH) constitute a cross-link (2'-(S-cysteinyl)-histidine (Cys-His)). Residues His249, His258, His358, His362, and His389 each coordinate Cu cation. 2 disulfides stabilise this stretch: Cys348-Cys415 and Cys476-Cys482.

The protein belongs to the tyrosinase family. Hemocyanin subfamily. In terms of assembly, decamers of large identical subunits (390 kDa), each containing 8 globular oxygen-binding functional units. It depends on Cu(2+) as a cofactor.

Hemocyanins are copper-containing oxygen carriers occurring freely dissolved in the hemolymph of many mollusks and arthropods. The sequence is that of Hemocyanin, units G and H from Sepia officinalis (Common cuttlefish).